The chain runs to 965 residues: Translation initiation factor IF-2 (965 aa).

The tract at residues 94-375 (RTFVRRDEAA…RGKHQESTTF (282 aa)) is disordered. The span at 104–115 (EQAAEATGNGQE) shows a compositional bias: low complexity. A compositionally biased stretch (basic and acidic residues) spans 121–177 (ELQRREEEARHEAELLEKQAQELKARQEQLAREEAERQAREQAAEAERRRAEEEAAK). Residues 181–191 (AAVAEAAAAAR) are compositionally biased toward low complexity. Residues 192–253 (EQAEQERASQ…KAEAEARAIR (62 aa)) show a composition bias toward basic and acidic residues. Pro residues predominate over residues 267–276 (PEPPPKPAEA). Positions 303 to 320 (KKPAPAAAAQPAATTQPA) are enriched in low complexity. The span at 351 to 364 (TSGGVDRGWRGGPK) shows a compositional bias: gly residues. Residues 465–634 (PRPPVVTVMG…LLQAEVLELK (170 aa)) form the tr-type G domain. The G1 stretch occupies residues 474–481 (GHVDHGKT). Residue 474–481 (GHVDHGKT) participates in GTP binding. Residues 499-503 (GITQH) form a G2 region. The G3 stretch occupies residues 520–523 (DTPG). Residues 520 to 524 (DTPGH) and 574 to 577 (NKID) contribute to the GTP site. The segment at 574-577 (NKID) is G4. The segment at 610 to 612 (SAK) is G5.

It belongs to the TRAFAC class translation factor GTPase superfamily. Classic translation factor GTPase family. IF-2 subfamily.

The protein localises to the cytoplasm. In terms of biological role, one of the essential components for the initiation of protein synthesis. Protects formylmethionyl-tRNA from spontaneous hydrolysis and promotes its binding to the 30S ribosomal subunits. Also involved in the hydrolysis of GTP during the formation of the 70S ribosomal complex. This Paraburkholderia phymatum (strain DSM 17167 / CIP 108236 / LMG 21445 / STM815) (Burkholderia phymatum) protein is Translation initiation factor IF-2.